The primary structure comprises 521 residues: Membrane-bound transcription factor site-2 protease (521 aa).

Residues 1 to 3 (MIP) are Cytoplasmic-facing. A helical membrane pass occupies residues 4–24 (VSLVVVVVGGWTVVYLTDLVL). The Lumenal portion of the chain corresponds to 25-74 (KSSVYFKHSYEDWLESNGLSISPFHIRWQTAVFNRAFYSWGRRKARMLYQ). A run of 2 helical transmembrane segments spans residues 75–95 (WFNF…FLLG) and 96–107 (KTLMQTLAQMMA). Residues 108-146 (DSPSSYSSSSSSSSSSSSSSSSSSSSSSSSSLHNEQVLQ) lie on the Lumenal side of the membrane. The tract at residues 113 to 137 (YSSSSSSSSSSSSSSSSSSSSSSSS) is disordered. A helical membrane pass occupies residues 147–171 (VVVPGINLPVNQLTYFFAAVLISGV). A Zn(2+)-binding site is contributed by His-173. Glu-174 is a catalytic residue. 3 consecutive transmembrane segments (helical) span residues 176-188 (GHGI…QVRF), 189-211 (NGFG…TTHL), and 231-253 (FVLA…PFYY). His-177 provides a ligand contact to Zn(2+). The Lumenal segment spans residues 254-448 (TGVGVLITEV…LPVVVETFVK (195 aa)). The N-linked (GlcNAc...) asparagine glycan is linked to Asn-339. Helical transmembrane passes span 449–466 (YLIS…VPCF) and 467–478 (ALDGQWILNSFL). Topologically, residues 479–494 (DATLTSVIGDNDVKDL) are lumenal. A helical membrane pass occupies residues 495-515 (IGFFILLGGSVLLAANVTLGL). At 516–521 (WMVTAR) the chain is on the cytoplasmic side.

The protein belongs to the peptidase M50A family. Zn(2+) serves as cofactor.

Its subcellular location is the membrane. It is found in the cytoplasm. The protein localises to the golgi apparatus membrane. It carries out the reaction Cleaves several transcription factors that are type-2 transmembrane proteins within membrane-spanning domains. Known substrates include sterol regulatory element-binding protein (SREBP) -1, SREBP-2 and forms of the transcriptional activator ATF6. SREBP-2 is cleaved at the site 477-DRSRILL-|-CVLTFLCLSFNPLTSLLQWGGA-505. The residues Asn-Pro, 11 residues distal to the site of cleavage in the membrane-spanning domain, are important for cleavage by S2P endopeptidase. Replacement of either of these residues does not prevent cleavage, but there is no cleavage if both of these residues are replaced.. Its function is as follows. Zinc metalloprotease that mediates intramembrane proteolysis of proteins such as ATF6, ATF6B, SREBF1/SREBP1 and SREBF2/SREBP2. Catalyzes the second step in the proteolytic activation of the sterol regulatory element-binding proteins (SREBPs) SREBF1/SREBP1 and SREBF2/SREBP2: cleaves SREBPs within the first transmembrane segment, thereby releasing the N-terminal segment with a portion of the transmembrane segment attached. Mature N-terminal SREBP fragments shuttle to the nucleus and activate gene transcription. Also mediates the second step in the proteolytic activation of the cyclic AMP-dependent transcription factor ATF-6 (ATF6 and ATF6B). Involved in intramembrane proteolysis during bone formation. In astrocytes and osteoblasts, upon DNA damage and ER stress, mediates the second step of the regulated intramembrane proteolytic activation of the transcription factor CREB3L1, leading to the inhibition of cell-cycle progression. The polypeptide is Membrane-bound transcription factor site-2 protease (MBTPS2) (Pongo abelii (Sumatran orangutan)).